Reading from the N-terminus, the 362-residue chain is MFLRLFKYLWPERYLPEIPAQDPFDENPPPCGPGRVGVLLVNLGTPDEPTRGAIRRYLGEFLSDPRVIEIPRYLWMPILHGLVLAMRPKKLAPRYAGIWMEEGSPLLVYSQRQAAGVRQGLAARGVHAEVELAMRYGKPSIPAAITALRERGCDHILAVPLYPQYAASTTATVVDAVTRHAGRLRDQPALRFVKRFHNDPAYVEAQAGRIAEFWQAHGRPQKLVMSFHGLPRYSIELGDPYYRDCLDTARLLRERLGLREDEVEVTFQSRFGSARWLEPYTEPTLAELARQGVTEVDVVCPGFVADCLETLEEISQECRDAFVAAGGRQFRYIPALNDCPPWIEGLTDLVERQLRGWPTGNP.

Fe cation-binding residues include histidine 228 and glutamate 309.

Belongs to the ferrochelatase family.

The protein resides in the cytoplasm. The catalysed reaction is heme b + 2 H(+) = protoporphyrin IX + Fe(2+). It functions in the pathway porphyrin-containing compound metabolism; protoheme biosynthesis; protoheme from protoporphyrin-IX: step 1/1. Catalyzes the ferrous insertion into protoporphyrin IX. This Bordetella parapertussis (strain 12822 / ATCC BAA-587 / NCTC 13253) protein is Ferrochelatase.